The primary structure comprises 551 residues: E3 ubiquitin-protein ligase HEL1 (551 aa).

The TRIAD supradomain stretch occupies residues 175 to 388 (NDFTCIICCD…KNFFQCTMYK (214 aa)). Positions 179, 182, 200, 203, 301, 304, 309, 314, 341, and 344 each coordinate Zn(2+). The RING-type 1 zinc-finger motif lies at 179-225 (CIICCDKKDTETFALECGHEYCINCYRHYIKDKLHEGNIITCMDCSL). The segment at 242-314 (SKLMDSSIKS…GFEVHSPADC (73 aa)) adopts an IBR-type zinc-finger fold. The RING-type 2; atypical zinc-finger motif lies at 341 to 370 (CPKCSVNIEKNGGCNHMVCSSCKYEFCWIC). Residue Cys354 is part of the active site. Residues Cys359, Cys362, Cys367, Cys370, His377, and Cys384 each coordinate Zn(2+).

This sequence belongs to the RBR family. In terms of assembly, interacts with the E2 ubiquitin-conjugating enzyme UBC4 and histones H3 and H4.

The catalysed reaction is [E2 ubiquitin-conjugating enzyme]-S-ubiquitinyl-L-cysteine + [acceptor protein]-L-lysine = [E2 ubiquitin-conjugating enzyme]-L-cysteine + [acceptor protein]-N(6)-ubiquitinyl-L-lysine.. It functions in the pathway protein modification; protein ubiquitination. Functionally, probable ubiquitin-protein ligase involved in the degradation-related ubiquitination of histones. Contributes to the post-translational regulation of histone protein levels by polyubiquitination of excess histones for subsequent degradation. The chain is E3 ubiquitin-protein ligase HEL1 from Saccharomyces cerevisiae (strain ATCC 204508 / S288c) (Baker's yeast).